The chain runs to 199 residues: Nucleoside triphosphate pyrophosphatase (199 aa).

Asp76 serves as the catalytic Proton acceptor.

This sequence belongs to the Maf family. A divalent metal cation is required as a cofactor.

The protein localises to the cytoplasm. The enzyme catalyses a ribonucleoside 5'-triphosphate + H2O = a ribonucleoside 5'-phosphate + diphosphate + H(+). It catalyses the reaction a 2'-deoxyribonucleoside 5'-triphosphate + H2O = a 2'-deoxyribonucleoside 5'-phosphate + diphosphate + H(+). Its function is as follows. Nucleoside triphosphate pyrophosphatase. May have a dual role in cell division arrest and in preventing the incorporation of modified nucleotides into cellular nucleic acids. The chain is Nucleoside triphosphate pyrophosphatase from Ruegeria pomeroyi (strain ATCC 700808 / DSM 15171 / DSS-3) (Silicibacter pomeroyi).